The chain runs to 326 residues: Regulation of nuclear pre-mRNA domain-containing protein 1B (326 aa).

The residue at position 2 (Ser2) is an N-acetylserine. The 132-residue stretch at 2 to 133 (SSFSESALEK…QLKLSMEDSK (132 aa)) folds into the CID domain. Over residues 128–144 (SMEDSKSPPPKAAEEKK) the composition is skewed to basic and acidic residues. Positions 128 to 148 (SMEDSKSPPPKAAEEKKSLKR) are disordered. A phosphoserine mark is found at Ser132 and Ser134. Tyr161 carries the phosphotyrosine modification. Ser166 and Ser299 each carry phosphoserine.

Belongs to the UPF0400 (RTT103) family. As to quaternary structure, homodimer. May form a heterodimer with RPRD1A. Associates with RPAP2. Associates with the RNA polymerase II complex. In terms of tissue distribution, widely expressed in the adult with highest levels in liver, colon, prostate and uterus and lowest levels in heart and kidney. Not detected in rectum.

The protein resides in the nucleus. In terms of biological role, interacts with phosphorylated C-terminal heptapeptide repeat domain (CTD) of the largest RNA polymerase II subunit POLR2A, and participates in dephosphorylation of the CTD by RPAP2. Transcriptional regulator which enhances expression of CCND1. Promotes binding of RNA polymerase II to the CCDN1 promoter and to the termination region before the poly-A site but decreases its binding after the poly-A site. Prevents RNA polymerase II from reading through the 3' end termination site and may allow it to be recruited back to the promoter through promotion of the formation of a chromatin loop. Also enhances the transcription of a number of other cell cycle-related genes including CDK2, CDK4, CDK6 and cyclin-E but not CDKN1A, CDKN1B or cyclin-A. Promotes cell proliferation. This chain is Regulation of nuclear pre-mRNA domain-containing protein 1B (Rprd1b), found in Mus musculus (Mouse).